Reading from the N-terminus, the 130-residue chain is General stress protein 13 (130 aa).

The region spanning 8–77 is the S1 motif domain; the sequence is GSVYTGKVTG…EKGKISLSIR (70 aa). Residues 76-109 form a disordered region; the sequence is IRATQAAPEKKESKPRKPKAAQVSEEASTPQGFN. Residues 100 to 109 show a composition bias toward polar residues; that stretch reads EEASTPQGFN.

In terms of assembly, found in association with the 30S subunit of the ribosome.

The protein resides in the cytoplasm. In Bacillus subtilis (strain 168), this protein is General stress protein 13 (yugI).